Reading from the N-terminus, the 67-residue chain is uncharacterized protein (67 aa).

A helical membrane pass occupies residues 26–46; the sequence is CYLLFCFLECFLNLFKKCGVF.

This sequence belongs to the plectrovirus ORF11 family.

Its subcellular location is the host membrane. This is an uncharacterized protein from Spiroplasma virus SpV1-C74 (SpV1).